We begin with the raw amino-acid sequence, 463 residues long: Carnosine N-methyltransferase (463 aa).

Disordered regions lie at residues 1–64 (MTKN…SQLK) and 79–104 (KHNHDHSHDHNHDYDDNNEDDEEKEE). Residues 9-58 (KSNNSNISNNNNNNNNNNNNNNNNNNNNNNNNNNNNNNNNNNNNNNNNKN) are compositionally biased toward low complexity. Over residues 79–93 (KHNHDHSHDHNHDYD) the composition is skewed to basic and acidic residues. Residues 94–103 (DNNEDDEEKE) show a composition bias toward acidic residues. The S-adenosyl-L-methionine site is built by glutamine 215, arginine 218, glycine 260, glutamate 281, aspartate 351, phenylalanine 352, and cysteine 367. A carnosine-binding site is contributed by aspartate 371. Tyrosine 379 serves as a coordination point for S-adenosyl-L-methionine. 2 residues coordinate carnosine: histidine 402 and tyrosine 450.

Belongs to the carnosine N-methyltransferase family.

It carries out the reaction carnosine + S-adenosyl-L-methionine = anserine + S-adenosyl-L-homocysteine + H(+). N-methyltransferase that mediates the formation of anserine (beta-alanyl-N(Pi)-methyl-L-histidine) from carnosine. The protein is Carnosine N-methyltransferase of Dictyostelium discoideum (Social amoeba).